Consider the following 311-residue polypeptide: Heme A synthase (311 aa).

Residues 1–6 are Cytoplasmic-facing; that stretch reads MQRFIK. The chain crosses the membrane as a helical span at residues 7 to 27; the sequence is WLAVITSLDLLIVLLGGALVT. The Extracellular segment spans residues 28–62; the sequence is KTGSGQGCGKSWPLCNGEFVPSNLSMETIIELSHR. A disulfide bridge connects residues Cys-35 and Cys-42. The active site involves Glu-58. His-61 contributes to the heme o binding site. The helical transmembrane segment at 63 to 83 threads the bilayer; the sequence is LTSGSAGILVTLLCILSWKYY. The Cytoplasmic segment spans residues 84–91; the sequence is KHVRETKT. A helical membrane pass occupies residues 92–112; it reads LAILSFVFLVAQALMGAAAVV. Topologically, residues 113 to 121 are extracellular; that stretch reads WGQMPAVLA. The chain crosses the membrane as a helical span at residues 122–142; the sequence is IHFGISLISFASVILLTCLIF. Heme o is bound at residue His-123. Residues 143–159 are Cytoplasmic-facing; sequence EIDQKFDARSLIMDKKM. Residues 160 to 180 form a helical membrane-spanning segment; sequence KFHIYGVTIYSYIVVYTGALV. Topologically, residues 181 to 211 are extracellular; it reads RHERASLACPDFPLCSKNRPMPTQLHEWVQM. Cys-189 and Cys-195 are disulfide-bonded. The chain crosses the membrane as a helical span at residues 212-232; that stretch reads GHRVAAMLIFAWILYAMILAI. His-213 serves as a coordination point for heme b. Topologically, residues 233 to 243 are cytoplasmic; that stretch reads RHYKQQPVVYW. A helical membrane pass occupies residues 244 to 264; that stretch reads GWIISFILVTLQAVVGVLVVF. Topologically, residues 265-271 are extracellular; sequence TNASLAM. The helical transmembrane segment at 272–292 threads the bilayer; the sequence is ALLHSLFISCLFAVLCYLVML. His-275 contacts heme b. Residues 293-311 are Cytoplasmic-facing; that stretch reads GTRIKVNAKEAGSTSKQTK.

The protein belongs to the COX15/CtaA family. Type 1 subfamily. As to quaternary structure, interacts with CtaB. Heme b is required as a cofactor.

The protein localises to the cell membrane. It catalyses the reaction Fe(II)-heme o + 2 A + H2O = Fe(II)-heme a + 2 AH2. It functions in the pathway porphyrin-containing compound metabolism; heme A biosynthesis; heme A from heme O: step 1/1. In terms of biological role, catalyzes the conversion of heme O to heme A by two successive hydroxylations of the methyl group at C8. The first hydroxylation forms heme I, the second hydroxylation results in an unstable dihydroxymethyl group, which spontaneously dehydrates, resulting in the formyl group of heme A. This Bacillus cereus (strain G9842) protein is Heme A synthase.